We begin with the raw amino-acid sequence, 606 residues long: Vitamin B12 transporter BtuB (606 aa).

A signal peptide spans Met-1–Ala-21. A TonB box motif is present at residues Asp-28–Asn-35. Residues Pro-40 to Ala-152 form the TBDR plug domain. In terms of domain architecture, TBDR beta-barrel spans Glu-157–Phe-606. A TonB C-terminal box motif is present at residues Glu-589–Phe-606.

The protein belongs to the TonB-dependent receptor family. BtuB (TC 1.B.14.3.1) subfamily.

The protein localises to the cell outer membrane. Functionally, involved in the active translocation of vitamin B12 (cyanocobalamin) across the outer membrane to the periplasmic space. It derives its energy for transport by interacting with the trans-periplasmic membrane protein TonB. This Photobacterium profundum (strain SS9) protein is Vitamin B12 transporter BtuB.